The sequence spans 257 residues: Type III pantothenate kinase (257 aa).

7–14 (DIGNSHTV) serves as a coordination point for ATP. 106-109 (GTDR) serves as a coordination point for substrate. Catalysis depends on Asp-108, which acts as the Proton acceptor. Position 128 (Asp-128) interacts with K(+). Residue Thr-132 participates in ATP binding. Thr-184 is a substrate binding site.

The protein belongs to the type III pantothenate kinase family. Homodimer. Requires NH4(+) as cofactor. The cofactor is K(+).

It localises to the cytoplasm. The enzyme catalyses (R)-pantothenate + ATP = (R)-4'-phosphopantothenate + ADP + H(+). It functions in the pathway cofactor biosynthesis; coenzyme A biosynthesis; CoA from (R)-pantothenate: step 1/5. Catalyzes the phosphorylation of pantothenate (Pan), the first step in CoA biosynthesis. This chain is Type III pantothenate kinase, found in Nocardioides sp. (strain ATCC BAA-499 / JS614).